We begin with the raw amino-acid sequence, 248 residues long: Cutinase (248 aa).

A signal peptide spans 1-17 (MRSLAILTTLLAGHAFA). The propeptide occupies 18-28 (YPKPAPQSVNR). Residues 31-70 (WPSINEFLSELAKVMPIGDTITAACDLISDGEDAAASLFG) are lid covering the active site of the uncomplexed enzyme. Cystine bridges form between Cys55–Cys91 and Cys79–Cys153. The active-site Nucleophile is the Ser164. Residues Cys212 and Cys219 are joined by a disulfide bond. The active site involves Asp216. His229 (proton donor/acceptor) is an active-site residue.

Belongs to the cutinase family.

It is found in the secreted. It carries out the reaction cutin + H2O = cutin monomers.. With respect to regulation, weakly inhibited by n-undecyl phosphonate (C11Y4). Activity unaffected by paraoxon. Catalyzes the hydrolysis of complex carboxylic polyesters found in the cell wall of plants. Degrades cutin, a macromolecule that forms the structure of the plant cuticle. This chain is Cutinase, found in Hypocrea jecorina (strain QM6a) (Trichoderma reesei).